Here is a 172-residue protein sequence, read N- to C-terminus: Endoribonuclease YbeY (172 aa).

Positions 136, 140, and 146 each coordinate Zn(2+).

The protein belongs to the endoribonuclease YbeY family. Zn(2+) is required as a cofactor.

The protein localises to the cytoplasm. Single strand-specific metallo-endoribonuclease involved in late-stage 70S ribosome quality control and in maturation of the 3' terminus of the 16S rRNA. This is Endoribonuclease YbeY from Rickettsia canadensis (strain McKiel).